The chain runs to 209 residues: Uracil phosphoribosyltransferase (209 aa).

5-phospho-alpha-D-ribose 1-diphosphate-binding positions include arginine 79, arginine 104, and 131–139; that span reads DPMLATGGS. Uracil is bound by residues isoleucine 194 and 199 to 201; that span reads GDA. 5-phospho-alpha-D-ribose 1-diphosphate is bound at residue aspartate 200.

The protein belongs to the UPRTase family. Requires Mg(2+) as cofactor.

The enzyme catalyses UMP + diphosphate = 5-phospho-alpha-D-ribose 1-diphosphate + uracil. The protein operates within pyrimidine metabolism; UMP biosynthesis via salvage pathway; UMP from uracil: step 1/1. With respect to regulation, allosterically activated by GTP. Functionally, catalyzes the conversion of uracil and 5-phospho-alpha-D-ribose 1-diphosphate (PRPP) to UMP and diphosphate. This is Uracil phosphoribosyltransferase from Symbiobacterium thermophilum (strain DSM 24528 / JCM 14929 / IAM 14863 / T).